Here is a 299-residue protein sequence, read N- to C-terminus: tRNA dimethylallyltransferase (299 aa).

Position 13–20 (13–20 (GPTASGKT)) interacts with ATP. 15 to 20 (TASGKT) is a binding site for substrate. The interval 38-41 (DSRQ) is interaction with substrate tRNA.

It belongs to the IPP transferase family. As to quaternary structure, monomer. The cofactor is Mg(2+).

It carries out the reaction adenosine(37) in tRNA + dimethylallyl diphosphate = N(6)-dimethylallyladenosine(37) in tRNA + diphosphate. Catalyzes the transfer of a dimethylallyl group onto the adenine at position 37 in tRNAs that read codons beginning with uridine, leading to the formation of N6-(dimethylallyl)adenosine (i(6)A). The polypeptide is tRNA dimethylallyltransferase (Prochlorococcus marinus (strain AS9601)).